Consider the following 109-residue polypeptide: uncharacterized protein (109 aa).

Its subcellular location is the mitochondrion. This is an uncharacterized protein from Marchantia polymorpha (Common liverwort).